Consider the following 454-residue polypeptide: UDP-glycosyltransferase 79A2 (454 aa).

UDP-alpha-D-glucose contacts are provided by residues Ser269, 330-331 (WV), 348-356 (HAGYGSVIE), and 370-373 (KVDQ).

This sequence belongs to the UDP-glycosyltransferase family.

May glycosylate diterpenes or flavonols in leaves. In Stevia rebaudiana (Stevia), this protein is UDP-glycosyltransferase 79A2.